A 118-amino-acid chain; its full sequence is Co-chaperonin GroES (118 aa).

It belongs to the GroES chaperonin family. As to quaternary structure, heptamer of 7 subunits arranged in a ring. Interacts with the chaperonin GroEL.

Its subcellular location is the cytoplasm. Together with the chaperonin GroEL, plays an essential role in assisting protein folding. The GroEL-GroES system forms a nano-cage that allows encapsulation of the non-native substrate proteins and provides a physical environment optimized to promote and accelerate protein folding. GroES binds to the apical surface of the GroEL ring, thereby capping the opening of the GroEL channel. This chain is Co-chaperonin GroES, found in Helicobacter pylori (strain Shi470).